The following is a 208-amino-acid chain: Large ribosomal subunit protein bL9 (208 aa).

The interval 168-208 is disordered; it reads GKVEKGSCTEGESLELGSVDNDINSGNVDSNESEKQDSVSE. A compositionally biased stretch (polar residues) spans 188 to 197; it reads NDINSGNVDS. Positions 199–208 are enriched in basic and acidic residues; it reads ESEKQDSVSE.

This sequence belongs to the bacterial ribosomal protein bL9 family.

Functionally, binds to the 23S rRNA. In Ehrlichia chaffeensis (strain ATCC CRL-10679 / Arkansas), this protein is Large ribosomal subunit protein bL9.